The sequence spans 207 residues: MKTKILSLANEEVGEITLNKDIFAVEFIRDDIIKQVIDWQRAKAMSGNHKTKTVSEVSGTTKKPFKQKGTGNARQGSLRSIQMRGGGISHGPKVRSHAIKLPKKVRKLGLIHALSEKCAAGKLLIINSLKLEKPKTSVLVNLLNKFQGQSFFIIDGNKVDTNFSLATKNIYNTLIVPQIGANVYDIIRHEYVLLSQEAVSFLEERLR.

The disordered stretch occupies residues 50–76; that stretch reads KTKTVSEVSGTTKKPFKQKGTGNARQG.

It belongs to the universal ribosomal protein uL4 family. In terms of assembly, part of the 50S ribosomal subunit.

Functionally, one of the primary rRNA binding proteins, this protein initially binds near the 5'-end of the 23S rRNA. It is important during the early stages of 50S assembly. It makes multiple contacts with different domains of the 23S rRNA in the assembled 50S subunit and ribosome. Its function is as follows. Forms part of the polypeptide exit tunnel. The polypeptide is Large ribosomal subunit protein uL4 (Rickettsia typhi (strain ATCC VR-144 / Wilmington)).